A 102-amino-acid chain; its full sequence is Large ribosomal subunit protein bL21 (102 aa).

The protein belongs to the bacterial ribosomal protein bL21 family. In terms of assembly, part of the 50S ribosomal subunit. Contacts protein L20.

This protein binds to 23S rRNA in the presence of protein L20. This chain is Large ribosomal subunit protein bL21, found in Myxococcus xanthus (strain DK1622).